The primary structure comprises 330 residues: Fructose-1,6-bisphosphatase class 1 (330 aa).

Residues Glu84, Asp103, Leu105, and Asp106 each contribute to the Mg(2+) site. Substrate-binding positions include Asp106–Ser109, Asn196, and Lys262. Mg(2+) is bound at residue Glu268.

This sequence belongs to the FBPase class 1 family. In terms of assembly, homotetramer. Mg(2+) serves as cofactor.

Its subcellular location is the cytoplasm. The enzyme catalyses beta-D-fructose 1,6-bisphosphate + H2O = beta-D-fructose 6-phosphate + phosphate. The protein operates within carbohydrate biosynthesis; gluconeogenesis. The protein is Fructose-1,6-bisphosphatase class 1 of Shewanella putrefaciens (strain CN-32 / ATCC BAA-453).